A 914-amino-acid polypeptide reads, in one-letter code: Neuropilin-1 (914 aa).

The signal sequence occupies residues 1 to 18; the sequence is MDWGLFLHCAALTFTLSR. The Extracellular segment spans residues 20 to 847; sequence LRSDKCGDTI…PGNVLKTLDP (828 aa). Disulfide bonds link cysteine 25-cysteine 52, cysteine 80-cysteine 102, and cysteine 145-cysteine 171. CUB domains lie at 25–139 and 145–263; these read CGDT…YEVF and CSRN…YSVS. A glycan (N-linked (GlcNAc...) asparagine) is linked at asparagine 148. Residues glutamate 193, aspartate 207, and aspartate 248 each contribute to the Ca(2+) site. A disulfide bridge connects residues cysteine 204 and cysteine 226. The N-linked (GlcNAc...) asparagine glycan is linked to asparagine 259. 2 disulfide bridges follow: cysteine 273–cysteine 422 and cysteine 429–cysteine 581. F5/8 type C domains are found at residues 273-422 and 429-581; these read CMEP…VYGC and CSGM…LLGC. A glycan (N-linked (GlcNAc...) asparagine) is linked at asparagine 520. A glycan (O-linked (Xyl...) (chondroitin sulfate) serine; alternate) is linked at serine 610. O-linked (Xyl...) (heparan sulfate) serine; alternate glycosylation occurs at serine 610. An MAM domain is found at 636–801; sequence PYNLNCGFGW…NHISQEDCQK (166 aa). The disordered stretch occupies residues 809 to 829; sequence IVEEDPESNQTGFTPSYRTDE. The span at 816-825 shows a compositional bias: polar residues; the sequence is SNQTGFTPSY. N-linked (GlcNAc...) asparagine glycosylation occurs at asparagine 817. A helical transmembrane segment spans residues 848 to 870; that stretch reads ILITIIAMSALGVLLGAICGVVL. Topologically, residues 871–914 are cytoplasmic; that stretch reads YCACWHNGMSERNLSALENYNFELVDGVKLKKDKLNTQNSYSEA.

It belongs to the neuropilin family. In terms of assembly, homodimer, and heterodimer. As to expression, developing nervous system; optic tectum (layers D and E of SGFS), amacrine cells of retina, neurites of dorsal root ganglia. Also expressed in non-neuronal cells, e.g. blood vessels in the entire embryo.

Its subcellular location is the mitochondrion membrane. It is found in the cell membrane. Receptor involved in the development of the cardiovascular system, in angiogenesis, in the formation of certain neuronal circuits and in organogenesis outside the nervous system. Mediates the chemorepulsant activity of semaphorins. Binding to VEGFA initiates a signaling pathway needed for motor neuron axon guidance and cell body migration, including for the caudal migration of facial motor neurons from rhombomere 4 to rhombomere 6 during embryonic development. Regulates mitochondrial iron transport via interaction. The sequence is that of Neuropilin-1 (NRP1) from Gallus gallus (Chicken).